Consider the following 84-residue polypeptide: MENIITATIFGSVILLAVAALATAIGFSLLGGKFLESSARQPELAASLQTKMFIVAGLLDAISMIAVGIALLFIFANPFIGLLN.

The next 2 membrane-spanning stretches (helical) occupy residues 9–29 (IFGSVILLAVAALATAIGFSL) and 54–74 (IVAGLLDAISMIAVGIALLFI).

Belongs to the ATPase C chain family. As to quaternary structure, F-type ATPases have 2 components, F(1) - the catalytic core - and F(0) - the membrane proton channel. F(1) has five subunits: alpha(3), beta(3), gamma(1), delta(1), epsilon(1). F(0) has three main subunits: a(1), b(2) and c(10-14). The alpha and beta chains form an alternating ring which encloses part of the gamma chain. F(1) is attached to F(0) by a central stalk formed by the gamma and epsilon chains, while a peripheral stalk is formed by the delta and b chains.

The protein localises to the cell inner membrane. Its function is as follows. F(1)F(0) ATP synthase produces ATP from ADP in the presence of a proton or sodium gradient. F-type ATPases consist of two structural domains, F(1) containing the extramembraneous catalytic core and F(0) containing the membrane proton channel, linked together by a central stalk and a peripheral stalk. During catalysis, ATP synthesis in the catalytic domain of F(1) is coupled via a rotary mechanism of the central stalk subunits to proton translocation. Functionally, key component of the F(0) channel; it plays a direct role in translocation across the membrane. A homomeric c-ring of between 10-14 subunits forms the central stalk rotor element with the F(1) delta and epsilon subunits. The polypeptide is ATP synthase subunit c (Histophilus somni (strain 129Pt) (Haemophilus somnus)).